A 158-amino-acid polypeptide reads, in one-letter code: Phosphopantetheine adenylyltransferase (158 aa).

Threonine 9 is a substrate binding site. ATP is bound by residues 9-10 (TF) and histidine 17. Substrate is bound by residues lysine 41, leucine 73, and arginine 87. Residues 88-90 (GLR), glutamate 98, and 123-129 (YAYISSS) each bind ATP.

Belongs to the bacterial CoaD family. As to quaternary structure, homohexamer. Mg(2+) is required as a cofactor.

It localises to the cytoplasm. It catalyses the reaction (R)-4'-phosphopantetheine + ATP + H(+) = 3'-dephospho-CoA + diphosphate. The protein operates within cofactor biosynthesis; coenzyme A biosynthesis; CoA from (R)-pantothenate: step 4/5. Its function is as follows. Reversibly transfers an adenylyl group from ATP to 4'-phosphopantetheine, yielding dephospho-CoA (dPCoA) and pyrophosphate. In Allochromatium vinosum (strain ATCC 17899 / DSM 180 / NBRC 103801 / NCIMB 10441 / D) (Chromatium vinosum), this protein is Phosphopantetheine adenylyltransferase.